The sequence spans 542 residues: Phenylalanine--tRNA ligase beta subunit (542 aa).

A B5 domain is found at 269-344; it reads LRRYTVSVSA…MTIGYDKLSP (76 aa). The Mg(2+) site is built by Asp322, Asp328, Glu331, and Glu332.

This sequence belongs to the phenylalanyl-tRNA synthetase beta subunit family. Type 2 subfamily. In terms of assembly, tetramer of two alpha and two beta subunits. Mg(2+) serves as cofactor.

It is found in the cytoplasm. It catalyses the reaction tRNA(Phe) + L-phenylalanine + ATP = L-phenylalanyl-tRNA(Phe) + AMP + diphosphate + H(+). This is Phenylalanine--tRNA ligase beta subunit from Sulfolobus acidocaldarius (strain ATCC 33909 / DSM 639 / JCM 8929 / NBRC 15157 / NCIMB 11770).